The following is a 101-amino-acid chain: Small ribosomal subunit protein uS10 (101 aa).

This sequence belongs to the universal ribosomal protein uS10 family. In terms of assembly, part of the 30S ribosomal subunit.

Functionally, involved in the binding of tRNA to the ribosomes. The chain is Small ribosomal subunit protein uS10 from Flavobacterium johnsoniae (strain ATCC 17061 / DSM 2064 / JCM 8514 / BCRC 14874 / CCUG 350202 / NBRC 14942 / NCIMB 11054 / UW101) (Cytophaga johnsonae).